The following is a 180-amino-acid chain: Signal peptidase complex subunit 3 (180 aa).

The Cytoplasmic segment spans residues 1–12 (MHNLLSRANALL). A helical; Signal-anchor for type II membrane protein membrane pass occupies residues 13-33 (AFTLWVMAAVTAACFLSTVFL). Over 34-180 (DYTVPTKLTV…PTTYTTTRRS (147 aa)) the chain is Lumenal. A glycan (N-linked (GlcNAc...) asparagine) is linked at asparagine 141.

It belongs to the SPCS3 family. As to quaternary structure, component of the signal peptidase complex (SPC) composed of a catalytic subunit sec-11 and three accessory subunits spcs-1, spcs-2 and spcs-3. The complex induces a local thinning of the ER membrane which is used to measure the length of the signal peptide (SP) h-region of protein substrates. This ensures the selectivity of the complex towards h-regions shorter than 18-20 amino acids.

Its subcellular location is the endoplasmic reticulum membrane. Its function is as follows. Essential component of the signal peptidase complex (SPC) which catalyzes the cleavage of N-terminal signal sequences from nascent proteins as they are translocated into the lumen of the endoplasmic reticulum. Essential for the SPC catalytic activity, possibly by stabilizing and positioning the active center of the complex close to the lumenal surface. The chain is Signal peptidase complex subunit 3 from Caenorhabditis elegans.